A 293-amino-acid polypeptide reads, in one-letter code: Elongation factor Ts (293 aa).

The involved in Mg(2+) ion dislocation from EF-Tu stretch occupies residues 80–83 (TDFV).

It belongs to the EF-Ts family.

Its subcellular location is the cytoplasm. Functionally, associates with the EF-Tu.GDP complex and induces the exchange of GDP to GTP. It remains bound to the aminoacyl-tRNA.EF-Tu.GTP complex up to the GTP hydrolysis stage on the ribosome. The protein is Elongation factor Ts of Staphylococcus aureus (strain Newman).